A 466-amino-acid polypeptide reads, in one-letter code: Uronate isomerase (466 aa).

It belongs to the metallo-dependent hydrolases superfamily. Uronate isomerase family.

The enzyme catalyses D-glucuronate = D-fructuronate. It carries out the reaction aldehydo-D-galacturonate = keto-D-tagaturonate. It participates in carbohydrate metabolism; pentose and glucuronate interconversion. This is Uronate isomerase from Rhizorhabdus wittichii (strain DSM 6014 / CCUG 31198 / JCM 15750 / NBRC 105917 / EY 4224 / RW1) (Sphingomonas wittichii).